The chain runs to 227 residues: ATP-dependent dethiobiotin synthetase BioD (227 aa).

13–18 (DIGKTY) contributes to the ATP binding site. T17 provides a ligand contact to Mg(2+). K38 is a catalytic residue. S42 contacts substrate. Residues D55, 116–119 (EGSG), and 179–180 (NN) contribute to the ATP site. Residues D55 and E116 each contribute to the Mg(2+) site.

The protein belongs to the dethiobiotin synthetase family. In terms of assembly, homodimer. Requires Mg(2+) as cofactor.

It is found in the cytoplasm. It catalyses the reaction (7R,8S)-7,8-diammoniononanoate + CO2 + ATP = (4R,5S)-dethiobiotin + ADP + phosphate + 3 H(+). It functions in the pathway cofactor biosynthesis; biotin biosynthesis; biotin from 7,8-diaminononanoate: step 1/2. Its function is as follows. Catalyzes a mechanistically unusual reaction, the ATP-dependent insertion of CO2 between the N7 and N8 nitrogen atoms of 7,8-diaminopelargonic acid (DAPA, also called 7,8-diammoniononanoate) to form a ureido ring. The sequence is that of ATP-dependent dethiobiotin synthetase BioD from Clostridium botulinum (strain Loch Maree / Type A3).